We begin with the raw amino-acid sequence, 330 residues long: MSTKNFRVSDGDWICPDKKCGNVNFARRTSCNRCGREKTTEAKMMKAGGTEIGKTLAEKSRGLFSANDWQCKTCSNVNWARRSECNMCNTPKYAKLEERTGYGGGFNERENVEYIEREESDGEYDEFGRKKKKYRGKAVGPASILKEVEDKESEGEEEDEDEDLSKYKLDEDEDEDDADLSKYNLDASEEEDSNKKKSNRRSRSKSRSSHSRSSSRSSSPSSSRSRSRSRSRSSSSSQSRSRSSSRERSRSRGSKSRSSSRSHRGSSSPRKRSYSSSSSSPERNRKRSRSRSSSSGDRKKRRTRSRSPERRHRSSSGSSHSGSRSSSKKK.

Ser-9 is modified (phosphoserine). Residues 9-40 form a RanBP2-type 1 zinc finger; that stretch reads SDGDWICPDKKCGNVNFARRTSCNRCGREKTT. 3 positions are modified to N6-acetyllysine: Lys-18, Lys-54, and Lys-92. The segment at 65 to 94 adopts a RanBP2-type 2 zinc-finger fold; that stretch reads SANDWQCKTCSNVNWARRSECNMCNTPKYA. A disordered region spans residues 117 to 330; sequence REESDGEYDE…SGSRSSSKKK (214 aa). Phosphoserine occurs at positions 120, 153, 181, 188, and 193. Residues 150-163 are compositionally biased toward acidic residues; sequence DKESEGEEEDEDED. Residues 151–324 are required for nuclear targeting; it reads KESEGEEEDE…SSGSSHSGSR (174 aa). Positions 196-210 are enriched in basic residues; sequence KKSNRRSRSKSRSSH. Low complexity-rich tracts occupy residues 211-224 and 232-242; these read SRSS…SSSR and RSSSSSQSRSR. Composition is skewed to basic residues over residues 251–273 and 298–314; these read SRGS…RKRS and RKKR…RHRS. A Phosphothreonine modification is found at Thr-303. Residues Ser-305, Ser-307, and Arg-310 each carry the phosphoserine modification. Positions 315–330 are enriched in low complexity; sequence SSGSSHSGSRSSSKKK.

Belongs to the ZRANB2 family. As to quaternary structure, interacts with the C-terminal half of SNRNP70, the Arg/Ser-rich domain of AKAP17A as well as with U2AF1 and CLK1. Isoform 2 is phosphorylated on Ser-310 upon DNA damage, probably by ATM or ATR.

It is found in the nucleus. In terms of biological role, splice factor required for alternative splicing of TRA2B/SFRS10 transcripts. Binds to ssRNA containing the consensus sequence 5'-AGGUAA-3'. May interfere with constitutive 5'-splice site selection. In Homo sapiens (Human), this protein is Zinc finger Ran-binding domain-containing protein 2 (ZRANB2).